The sequence spans 238 residues: Modulator of macroautophagy TMEM150B (238 aa).

The Cytoplasmic segment spans residues 1–8 (MWNYLSLL). A helical membrane pass occupies residues 9 to 29 (PVILFLWAIAGIWIVFAIAVV). Residue N30 is glycosylated (N-linked (GlcNAc...) asparagine). At 30 to 51 (NGSVDLNEGFPFISICGSYAPQ) the chain is on the extracellular side. A helical transmembrane segment spans residues 52–72 (SCIFGQVLNIGAALTVWICIV). The Cytoplasmic portion of the chain corresponds to 73–86 (RHHQLRDWGVKTWQ). A helical transmembrane segment spans residues 87 to 107 (NQLILWSGILCALGTSIVGNF). The Extracellular segment spans residues 108-116 (QDKNQKPTH). The helical transmembrane segment at 117-137 (LAGAFLAFILGNLYFWLQFFL) threads the bilayer. The Cytoplasmic segment spans residues 138 to 156 (SWWVKGLPQPGPHWIKSLR). The helical transmembrane segment at 157-177 (LSLCSLSTILIVAMIVLHALH) threads the bilayer. Residues 178 to 186 (MRSASAICE) are Extracellular-facing. A helical membrane pass occupies residues 187-207 (WVVAMLLFMLFGFFAVDFSIL). Topologically, residues 208 to 238 (RGCTLHLHPRLDSSLPQAPSGSPNIQMAQVL) are cytoplasmic.

Belongs to the DRAM/TMEM150 family.

It localises to the cell membrane. The protein localises to the endosome membrane. The protein resides in the cytoplasmic vesicle. Its subcellular location is the autophagosome membrane. Modulator of macroautophagy that causes accumulation of autophagosomes under basal conditions and enhances autophagic flux. Represses cell death and promotes long-term clonogenic survival of cells grown in the absence of glucose in a macroautophagy-independent manner. May have some role in extracellular matrix engulfment or growth factor receptor recycling, both of which can modulate cell survival. This chain is Modulator of macroautophagy TMEM150B, found in Mus musculus (Mouse).